The sequence spans 1229 residues: ABC transporter B family member 22 (1229 aa).

Transmembrane regions (helical) follow at residues 22 to 42, 69 to 89, 145 to 167, 171 to 193, 251 to 271, and 274 to 294; these read MGLG…IFFI, VALL…GYCW, LPNF…IMLW, IVGF…ALIN, GIAI…TWYG, and MVMY…CITY. The ABC transmembrane type-1 1 domain occupies 22 to 311; sequence MGLGLIGAVG…GLSNLKYFSE (290 aa). The 237-residue stretch at 346 to 582 folds into the ABC transporter 1 domain; the sequence is VQFKHVKFMY…VDGQYTSLVR (237 aa). ATP is bound at residue 381-388; sequence GGSGSGKS. Residues N529 and N594 are each glycosylated (N-linked (GlcNAc...) asparagine). 2 helical membrane-spanning segments follow: residues 661-681 and 703-723; these read ALYG…YAYA and IYVL…IIQQ. The 289-residue stretch at 661–949 folds into the ABC transmembrane type-1 2 domain; the sequence is ALYGCLSAVL…AGAMTMDLAK (289 aa). A glycan (N-linked (GlcNAc...) asparagine) is linked at N758. 4 consecutive transmembrane segments (helical) span residues 782–800, 807–823, 885–908, and 923–943; these read VSLL…TLGL, SIVM…CFYT, WLAG…NYWY, and FFEL…AGAM. Residues 984–1222 enclose the ABC transporter 2 domain; the sequence is IKFVNVDFAY…GPTGVYFSLV (239 aa). N1004 carries an N-linked (GlcNAc...) asparagine glycan. 1019-1026 serves as a coordination point for ATP; sequence GPSGSGKS. N1157 is a glycosylation site (N-linked (GlcNAc...) asparagine).

Belongs to the ABC transporter superfamily. ABCB family. Multidrug resistance exporter (TC 3.A.1.201) subfamily.

The protein localises to the membrane. This is ABC transporter B family member 22 (ABCB22) from Arabidopsis thaliana (Mouse-ear cress).